Here is a 370-residue protein sequence, read N- to C-terminus: Succinoglycan biosynthesis protein ExoH (370 aa).

10 consecutive transmembrane segments (helical) span residues 14-34 (ILLISGIVFVHVPYNPQWSPF), 46-66 (VFLGESLFRIGVPCLSAISGY), 88-108 (TVLLPFLIWSGSFFVVVYAIQ), 144-164 (LYFLRDLMLCILLSPLLALLV), 170-190 (VTLLALLAYAILPLPNGIFLK), 193-213 (ILFGFSAGIYASLHGVNIKML), 216-236 (FAAPIAAGFLAIAVVIAVGLY), 244-264 (LWLDMALRLTSIAGIIGSWAI), 282-302 (GLSFWIFCGHYPLLVLFWMIW), and 307-327 (LSYYPLFYFTAPFIAIAILVA). The segment at 350-370 (AKRMATQPPQGAQAGYSPQQR) is disordered.

The protein belongs to the acyltransferase 3 family.

The protein localises to the cell membrane. Its pathway is glycan metabolism; exopolysaccharide biosynthesis. In terms of biological role, required for the succinyl modification of the seventh sugar (glucose) of the octasaccharide subunit of succinoglycan (EPS I). The chain is Succinoglycan biosynthesis protein ExoH (exoH) from Rhizobium meliloti (strain 1021) (Ensifer meliloti).